Consider the following 274-residue polypeptide: Kit ligand (274 aa).

Positions 1 to 25 (MKKTQTWIITCIYLQLLLFNPLVHS) are cleaved as a signal peptide. Position 26 is a pyrrolidone carboxylic acid (glutamine 26). Topologically, residues 26–215 (QGICRNRVTD…SNSIEDSSLQ (190 aa)) are extracellular. Disulfide bonds link cysteine 29-cysteine 114 and cysteine 68-cysteine 164. N-linked (GlcNAc...) asparagine glycosylation is found at asparagine 90, asparagine 97, asparagine 145, and asparagine 196. A helical membrane pass occupies residues 216 to 238 (WAAVALPAFFSLVIGFAFGALYW). The Cytoplasmic portion of the chain corresponds to 239 to 274 (KKKQPNLTRTVENRQINEEDNEISMLQEKEREFQEV).

The protein belongs to the SCF family. In terms of assembly, homodimer, non-covalently linked. In terms of processing, a soluble form is produced by proteolytic processing of the extracellular domain.

The protein resides in the cytoplasm. The protein localises to the cytoskeleton. It is found in the cell membrane. Its subcellular location is the cell projection. It localises to the lamellipodium. The protein resides in the filopodium. The protein localises to the secreted. In terms of biological role, stimulates the proliferation of mast cells. Able to augment the proliferation of both myeloid and lymphoid hematopoietic progenitors in bone marrow culture. Also mediates cell-cell adhesion. Acts synergistically with other cytokines, probably interleukins. The sequence is that of Kit ligand (KITLG) from Capra hircus (Goat).